A 445-amino-acid chain; its full sequence is GTPase Der (445 aa).

2 consecutive EngA-type G domains span residues 3–167 (PVIA…YAGQ) and 180–353 (VKIA…AAAM). GTP is bound by residues 9-16 (GRPNVGKS), 56-60 (DTGGF), 119-122 (NKAE), 186-193 (GRPNVGKS), 233-237 (DTAGL), and 298-301 (NKWD). Positions 354-438 (AKLPTPKLTR…PLRIEFRSST (85 aa)) constitute a KH-like domain.

Belongs to the TRAFAC class TrmE-Era-EngA-EngB-Septin-like GTPase superfamily. EngA (Der) GTPase family. As to quaternary structure, associates with the 50S ribosomal subunit.

GTPase that plays an essential role in the late steps of ribosome biogenesis. The chain is GTPase Der from Paraburkholderia xenovorans (strain LB400).